The sequence spans 422 residues: Glutamate-1-semialdehyde 2,1-aminomutase (422 aa).

Lysine 258 is modified (N6-(pyridoxal phosphate)lysine).

The protein belongs to the class-III pyridoxal-phosphate-dependent aminotransferase family. HemL subfamily. Homodimer. Pyridoxal 5'-phosphate is required as a cofactor.

The protein resides in the cytoplasm. It carries out the reaction (S)-4-amino-5-oxopentanoate = 5-aminolevulinate. Its pathway is porphyrin-containing compound metabolism; protoporphyrin-IX biosynthesis; 5-aminolevulinate from L-glutamyl-tRNA(Glu): step 2/2. The sequence is that of Glutamate-1-semialdehyde 2,1-aminomutase from Chlamydia trachomatis serovar D (strain ATCC VR-885 / DSM 19411 / UW-3/Cx).